We begin with the raw amino-acid sequence, 117 residues long: Glycoprotein hormones alpha chain (117 aa).

Positions 1-23 (MGSVKSAGLSLLLLSFLLYVADS) are cleaved as a signal peptide. Intrachain disulfides connect C34-C57, C37-C86, C54-C107, C58-C109, and C85-C112. Residues N78 and N103 are each glycosylated (N-linked (GlcNAc...) asparagine).

It belongs to the glycoprotein hormones subunit alpha family. Heterodimer. Glycoprotein hormones are heterodimers composed of a common alpha chain described here and a unique beta chain which confers their biological specificity to the different hormones.

Its subcellular location is the secreted. Shared alpha chain of heterodimeric glycoprotein hormones. These hormones bind specific receptors on target cells that in turn activate downstream signaling pathways. Involved in gametogenesis and steroidogenesis. This chain is Glycoprotein hormones alpha chain (cga), found in Acanthopagrus latus (Yellowfin seabream).